The chain runs to 91 residues: Bombyxin B-1 homolog (91 aa).

A signal peptide spans 1-19 (MKVSMFVVIVLCMVAASSA). Disulfide bonds link C27–C78, C39–C91, and C77–C82. Residues 49–69 (SGAQYARYGWQSPESREGARG) constitute a propeptide, c peptide like.

The protein belongs to the insulin family. Heterodimer of a B chain and an A chain linked by two disulfide bonds.

The protein resides in the secreted. Brain peptide responsible for activation of prothoracic glands to produce ecdysone in insects. The polypeptide is Bombyxin B-1 homolog (SBXB1) (Samia cynthia (Ailanthus silkmoth)).